The sequence spans 193 residues: Peptidyl-tRNA hydrolase (193 aa).

Tyr-14 lines the tRNA pocket. His-19 functions as the Proton acceptor in the catalytic mechanism. Residues Phe-64, Asn-66, and Asn-112 each coordinate tRNA.

Belongs to the PTH family. Monomer.

It localises to the cytoplasm. It carries out the reaction an N-acyl-L-alpha-aminoacyl-tRNA + H2O = an N-acyl-L-amino acid + a tRNA + H(+). Its function is as follows. Hydrolyzes ribosome-free peptidyl-tRNAs (with 1 or more amino acids incorporated), which drop off the ribosome during protein synthesis, or as a result of ribosome stalling. In terms of biological role, catalyzes the release of premature peptidyl moieties from peptidyl-tRNA molecules trapped in stalled 50S ribosomal subunits, and thus maintains levels of free tRNAs and 50S ribosomes. In Bartonella henselae (strain ATCC 49882 / DSM 28221 / CCUG 30454 / Houston 1) (Rochalimaea henselae), this protein is Peptidyl-tRNA hydrolase.